Reading from the N-terminus, the 120-residue chain is Superoxide dismutase [Cu-Zn] (120 aa).

Residues His-11, His-13, and His-28 each coordinate Cu cation. Positions 16-52 are disordered; that stretch reads GDTTNGCMSTGPHFNPTGKEHGAPQDENRHAGDLGNI. An intrachain disulfide couples Cys-22 to Cys-112. The Zn(2+) site is built by His-28, His-36, His-45, and Asp-48. Positions 33-47 are enriched in basic and acidic residues; the sequence is GKEHGAPQDENRHAG. His-85 contributes to the Cu cation binding site.

This sequence belongs to the Cu-Zn superoxide dismutase family. In terms of assembly, homodimer. It depends on Cu cation as a cofactor. Zn(2+) serves as cofactor.

It localises to the cytoplasm. The catalysed reaction is 2 superoxide + 2 H(+) = H2O2 + O2. Destroys radicals which are normally produced within the cells and which are toxic to biological systems. This is Superoxide dismutase [Cu-Zn] (sodC) from Aspergillus japonicus.